A 288-amino-acid polypeptide reads, in one-letter code: ATP synthase gamma chain (288 aa).

This sequence belongs to the ATPase gamma chain family. F-type ATPases have 2 components, CF(1) - the catalytic core - and CF(0) - the membrane proton channel. CF(1) has five subunits: alpha(3), beta(3), gamma(1), delta(1), epsilon(1). CF(0) has three main subunits: a, b and c.

The protein resides in the cell inner membrane. Produces ATP from ADP in the presence of a proton gradient across the membrane. The gamma chain is believed to be important in regulating ATPase activity and the flow of protons through the CF(0) complex. This is ATP synthase gamma chain from Aeromonas hydrophila subsp. hydrophila (strain ATCC 7966 / DSM 30187 / BCRC 13018 / CCUG 14551 / JCM 1027 / KCTC 2358 / NCIMB 9240 / NCTC 8049).